The chain runs to 179 residues: Inner membrane-spanning protein YciB (179 aa).

Helical transmembrane passes span 22 to 42, 50 to 70, 76 to 96, 121 to 141, and 149 to 169; these read IYAA…YTWI, MALI…FFHN, WKVT…QWVM, IAWA…AFWM, and FKVF…GVYI.

This sequence belongs to the YciB family.

The protein localises to the cell inner membrane. In terms of biological role, plays a role in cell envelope biogenesis, maintenance of cell envelope integrity and membrane homeostasis. The protein is Inner membrane-spanning protein YciB of Enterobacter sp. (strain 638).